Reading from the N-terminus, the 248-residue chain is Kallikrein-12 (248 aa).

The first 17 residues, 1-17 (MGLSIFLLLCVLGLSQA), serve as a signal peptide directing secretion. The region spanning 22-246 (IFNGTECGRN…YVDWIRMIMR (225 aa)) is the Peptidase S1 domain. Residue Asn24 is glycosylated (N-linked (GlcNAc...) asparagine). 6 disulfides stabilise this stretch: Cys28–Cys161, Cys47–Cys63, Cys133–Cys235, Cys140–Cys206, Cys172–Cys186, and Cys196–Cys222. Active-site charge relay system residues include His62 and Asp108. A glycan (N-linked (GlcNAc...) asparagine) is linked at Asn163. Residue Ser200 is the Charge relay system of the active site.

The protein belongs to the peptidase S1 family. Kallikrein subfamily.

It localises to the secreted. The sequence is that of Kallikrein-12 (KLK12) from Homo sapiens (Human).